The following is a 392-amino-acid chain: uncharacterized protein (392 aa).

The protein belongs to the chlamydial CPn_0675/CT_696/TC_0068 family.

This is an uncharacterized protein from Chlamydia muridarum (strain MoPn / Nigg).